The following is a 134-amino-acid chain: UPF0412 protein YaaI (134 aa).

Positions 1–23 (MKSVITISASLAISLMLCCTAQA) are cleaved as a signal peptide.

Belongs to the UPF0412 family.

In Escherichia coli (strain UTI89 / UPEC), this protein is UPF0412 protein YaaI.